A 58-amino-acid chain; its full sequence is Potassium channel toxin alpha-KTx 9.9 (58 aa).

The first 21 residues, 1–21 (KKTSRLFTLVLIVLAMNVMMA), serve as a signal peptide directing secretion. The propeptide occupies 22–30 (IISDPVVEA). 3 disulfide bridges follow: Cys33–Cys49, Cys36–Cys54, and Cys40–Cys56.

This sequence belongs to the short scorpion toxin superfamily. Potassium channel inhibitor family. Alpha-KTx 09 subfamily. In terms of tissue distribution, expressed by the venom gland.

The protein localises to the secreted. Its function is as follows. Potassium channel inhibitor. This Buthus israelis (Israeli scorpion) protein is Potassium channel toxin alpha-KTx 9.9.